Reading from the N-terminus, the 292-residue chain is Ribosomal protein L11 methyltransferase (292 aa).

S-adenosyl-L-methionine is bound by residues threonine 144, glycine 165, aspartate 187, and asparagine 229.

This sequence belongs to the methyltransferase superfamily. PrmA family.

The protein resides in the cytoplasm. It carries out the reaction L-lysyl-[protein] + 3 S-adenosyl-L-methionine = N(6),N(6),N(6)-trimethyl-L-lysyl-[protein] + 3 S-adenosyl-L-homocysteine + 3 H(+). In terms of biological role, methylates ribosomal protein L11. In Azotobacter vinelandii (strain DJ / ATCC BAA-1303), this protein is Ribosomal protein L11 methyltransferase.